The following is a 1685-amino-acid chain: Myomesin-1 (1685 aa).

Residues 33 to 80 (KKRSAVYTQGSTAYSSRSSAAHRRESEAFRRASASSSQQQASQHALSS) are disordered. Low complexity-rich tracts occupy residues 41–51 (QGSTAYSSRSS) and 63–80 (RASA…ALSS). Ser-113 carries the post-translational modification Phosphoserine. The segment at 177 to 244 (GITTSKQSTA…TSEKKSRKVV (68 aa)) is disordered. Over residues 179–220 (TTSKQSTASKQTTASKQSTASKQSTASKQSTASRQSTASRQS) the composition is skewed to low complexity. 6 consecutive repeat copies span residues 182–187 (KQSTAS), 188–193 (KQTTAS), 194–199 (KQSTAS), 200–205 (KQSTAS), 206–211 (KQSTAS), and 212–217 (RQSTAS). The interval 182-217 (KQSTASKQTTASKQSTASKQSTASKQSTASRQSTAS) is 6 X 6 AA tandem repeats. The segment covering 221–233 (VVSKQATSALQQE) has biased composition (polar residues). Ig-like C2-type domains are found at residues 277–368 (PEFI…ASVV) and 396–498 (PYGY…AYVF). Fibronectin type-III domains follow at residues 512–607 (APLD…ALDP), 640–734 (PPTD…VVGD), and 741–834 (APGK…VKAA). Residues 840–938 (SPDVCPALSD…TDRAPPSPPC (99 aa)) are disordered. The segment covering 874 to 888 (LLGSKPNKPSLPSSS) has biased composition (low complexity). A phosphoserine mark is found at Ser-883 and Ser-887. Polar residues predominate over residues 889–902 (QNLGQTEVSKVSET). The segment covering 920 to 931 (SKSDPLKKKTDR) has biased composition (basic and acidic residues). Fibronectin type-III domains are found at residues 933-1034 (PPSP…CEEW) and 1041-1140 (PPHS…TRPG). A Phosphoserine modification is found at Ser-1054. Ig-like C2-type domains follow at residues 1132–1230 (PVVA…EELK), 1358–1444 (PHFV…LKLV), and 1573–1662 (RVLG…FTVS). Cys-1160 and Cys-1210 are disulfide-bonded.

As to quaternary structure, homodimer. Interacts with TTN/titin. Interacts with PNKD.

The protein localises to the cytoplasm. The protein resides in the myofibril. It is found in the sarcomere. Its subcellular location is the m line. Functionally, major component of the vertebrate myofibrillar M band. Binds myosin, titin, and light meromyosin. This binding is dose dependent. In Homo sapiens (Human), this protein is Myomesin-1 (MYOM1).